A 503-amino-acid polypeptide reads, in one-letter code: Endoglycoceramidase (503 aa).

Residues 1-21 form the signal peptide; the sequence is MAETQPLVFVLMSISAILTAG. N-linked (GlcNAc...) asparagine glycosylation is found at Asn72, Asn108, and Asn205. The active-site Proton donor is Glu239. 3 N-linked (GlcNAc...) asparagine glycosylation sites follow: Asn307, Asn409, and Asn485.

It belongs to the glycosyl hydrolase 5 (cellulase A) family.

It localises to the secreted. The protein resides in the nematocyst. It carries out the reaction an oligoglycosyl-(1-&gt;4)-beta-D-glucosyl-(1&lt;-&gt;1)-ceramide + H2O = an oligoglycosyl-(1-&gt;4)-D-glucose + an N-acyl-sphingoid base. With respect to regulation, completely inhibited by Hg(2+). Cu(2+) and zinc have no effect on enzyme activity. Lithium, potassium, manganese, Ni(2+), calcium, magnesium and EDTA have no significant effect on enzyme activity. Enzyme requires presence of detergents such as Triton X-100 and Lubrol PX for the hydrolysis of glycosphingolipids. Taurodeoxycholate strongly inhibits the enzyme activity and SDS completely inhibits the enzyme activity. In terms of biological role, hydrolysis of the glycosidic linkage between oligosaccharides and ceramides of glycosphingolipids, especially b-series polysialogangliosides. This Cyanea nozakii (Jellyfish) protein is Endoglycoceramidase.